Consider the following 251-residue polypeptide: Pyrroloquinoline-quinone synthase (251 aa).

This sequence belongs to the PqqC family.

The enzyme catalyses 6-(2-amino-2-carboxyethyl)-7,8-dioxo-1,2,3,4,7,8-hexahydroquinoline-2,4-dicarboxylate + 3 O2 = pyrroloquinoline quinone + 2 H2O2 + 2 H2O + H(+). It functions in the pathway cofactor biosynthesis; pyrroloquinoline quinone biosynthesis. In terms of biological role, ring cyclization and eight-electron oxidation of 3a-(2-amino-2-carboxyethyl)-4,5-dioxo-4,5,6,7,8,9-hexahydroquinoline-7,9-dicarboxylic-acid to PQQ. The chain is Pyrroloquinoline-quinone synthase from Pseudomonas syringae pv. syringae (strain B728a).